A 305-amino-acid polypeptide reads, in one-letter code: UDP-3-O-acyl-N-acetylglucosamine deacetylase (305 aa).

Positions 78, 237, and 241 each coordinate Zn(2+). H264 functions as the Proton donor in the catalytic mechanism.

Belongs to the LpxC family. It depends on Zn(2+) as a cofactor.

The enzyme catalyses a UDP-3-O-[(3R)-3-hydroxyacyl]-N-acetyl-alpha-D-glucosamine + H2O = a UDP-3-O-[(3R)-3-hydroxyacyl]-alpha-D-glucosamine + acetate. Its pathway is glycolipid biosynthesis; lipid IV(A) biosynthesis; lipid IV(A) from (3R)-3-hydroxytetradecanoyl-[acyl-carrier-protein] and UDP-N-acetyl-alpha-D-glucosamine: step 2/6. Its function is as follows. Catalyzes the hydrolysis of UDP-3-O-myristoyl-N-acetylglucosamine to form UDP-3-O-myristoylglucosamine and acetate, the committed step in lipid A biosynthesis. The polypeptide is UDP-3-O-acyl-N-acetylglucosamine deacetylase (Cupriavidus pinatubonensis (strain JMP 134 / LMG 1197) (Cupriavidus necator (strain JMP 134))).